We begin with the raw amino-acid sequence, 558 residues long: Factor VII-activating protease (558 aa).

The signal sequence occupies residues 1–23 (MSVVMLVFRVLLLIALVGNSAIG). EGF-like domains are found at residues 71 to 107 (DDDPCQSNPCEHGGDCIIRGNTFSCSCPAPFSGSRCQ), 109 to 146 (VQNKCKDNPCVQGDCLITQTPPYYRCACKYPYTGPDCS), and 148 to 186 (VLPVCRPNPCQNGGVCSRHRRRSRFSCACPDQYKGRFCE). 18 cysteine pairs are disulfide-bonded: cysteine 75–cysteine 86, cysteine 80–cysteine 95, cysteine 97–cysteine 106, cysteine 113–cysteine 123, cysteine 118–cysteine 134, cysteine 136–cysteine 145, cysteine 152–cysteine 163, cysteine 157–cysteine 174, cysteine 176–cysteine 185, cysteine 192–cysteine 274, cysteine 213–cysteine 255, cysteine 244–cysteine 269, cysteine 299–cysteine 433, cysteine 345–cysteine 361, cysteine 353–cysteine 422, cysteine 445–cysteine 513, cysteine 475–cysteine 491, and cysteine 503–cysteine 531. The Kringle domain occupies 191–274 (DCYVGDGYSY…KWEYCNVEVC (84 aa)). The Peptidase S1 domain occupies 312–553 (IYGGFKSTAG…FLNWIKTTMH (242 aa)). Catalysis depends on charge relay system residues histidine 360 and aspartate 409. Serine 507 acts as the Charge relay system in catalysis.

This sequence belongs to the peptidase S1 family. In terms of assembly, heterodimer; disulfide-linked. Heterodimer of a 50 kDa heavy and a 27 kDa light chain linked by a disulfide bond. In terms of processing, proteolytic cleavage at Gly-23 or Met-27 can give rise to the 50 kDa heavy chain (HC) and cleavage at Arg-311 or Lys-317 can give rise to the 27 kDa light chain (LC). The HC can undergo further proteolytic cleavage giving rise to a 26 kDa fragment. The LC can undergo further proteolytic cleavage at Arg-311 leading to a 17-kDa fragment and at Arg-478 leading to a 8-kDa fragment.

It localises to the secreted. Functionally, cleaves the alpha-chain at multiple sites and the beta-chain between 'Lys-53' and 'Lys-54' but not the gamma-chain of fibrinogen and therefore does not initiate the formation of the fibrin clot and does not cause the fibrinolysis directly. It does not cleave (activate) prothrombin and plasminogen but converts the inactive single chain urinary plasminogen activator (pro-urokinase) to the active two chain form. Activates coagulation factor VII. May function as a tumor suppressor negatively regulating cell proliferation and cell migration. In Rattus norvegicus (Rat), this protein is Factor VII-activating protease.